The sequence spans 427 residues: 3-phosphoshikimate 1-carboxyvinyltransferase (427 aa).

Residues K22, S23, and R27 each coordinate 3-phosphoshikimate. K22 provides a ligand contact to phosphoenolpyruvate. Phosphoenolpyruvate-binding residues include G96 and R124. The 3-phosphoshikimate site is built by S169, S170, Q171, S197, D313, N336, and K340. Q171 serves as a coordination point for phosphoenolpyruvate. D313 serves as the catalytic Proton acceptor. 3 residues coordinate phosphoenolpyruvate: R344, R386, and K411.

Belongs to the EPSP synthase family. In terms of assembly, monomer.

It localises to the cytoplasm. The enzyme catalyses 3-phosphoshikimate + phosphoenolpyruvate = 5-O-(1-carboxyvinyl)-3-phosphoshikimate + phosphate. It participates in metabolic intermediate biosynthesis; chorismate biosynthesis; chorismate from D-erythrose 4-phosphate and phosphoenolpyruvate: step 6/7. Catalyzes the transfer of the enolpyruvyl moiety of phosphoenolpyruvate (PEP) to the 5-hydroxyl of shikimate-3-phosphate (S3P) to produce enolpyruvyl shikimate-3-phosphate and inorganic phosphate. In Salmonella typhimurium (strain LT2 / SGSC1412 / ATCC 700720), this protein is 3-phosphoshikimate 1-carboxyvinyltransferase.